The chain runs to 44 residues: Photosystem I reaction center subunit IX (44 aa).

A helical membrane pass occupies residues 9–29 (WFRSAPVVATIWIVLTAGILV).

It belongs to the PsaJ family.

It localises to the cellular thylakoid membrane. Functionally, may help in the organization of the PsaE and PsaF subunits. The chain is Photosystem I reaction center subunit IX from Prochlorococcus marinus (strain MIT 9211).